A 234-amino-acid chain; its full sequence is Adenosine 5'-phosphosulfate reductase (234 aa).

[4Fe-4S] cluster-binding residues include cysteine 120, cysteine 121, cysteine 203, and cysteine 206. Residue cysteine 229 is the Nucleophile; cysteine thiosulfonate intermediate of the active site.

Belongs to the PAPS reductase family. CysH subfamily. Requires [4Fe-4S] cluster as cofactor.

The protein localises to the cytoplasm. It catalyses the reaction [thioredoxin]-disulfide + sulfite + AMP + 2 H(+) = adenosine 5'-phosphosulfate + [thioredoxin]-dithiol. It participates in sulfur metabolism; hydrogen sulfide biosynthesis; sulfite from sulfate. Its function is as follows. Catalyzes the formation of sulfite from adenosine 5'-phosphosulfate (APS) using thioredoxin as an electron donor. The polypeptide is Adenosine 5'-phosphosulfate reductase (Bacillus mycoides (strain KBAB4) (Bacillus weihenstephanensis)).